The sequence spans 92 residues: Elongation factor 1-beta (92 aa).

The protein belongs to the EF-1-beta/EF-1-delta family.

Promotes the exchange of GDP for GTP in EF-1-alpha/GDP, thus allowing the regeneration of EF-1-alpha/GTP that could then be used to form the ternary complex EF-1-alpha/GTP/AAtRNA. The polypeptide is Elongation factor 1-beta (Pyrobaculum calidifontis (strain DSM 21063 / JCM 11548 / VA1)).